We begin with the raw amino-acid sequence, 259 residues long: 3-deoxy-manno-octulosonate cytidylyltransferase (259 aa).

The protein belongs to the KdsB family.

The protein resides in the cytoplasm. The catalysed reaction is 3-deoxy-alpha-D-manno-oct-2-ulosonate + CTP = CMP-3-deoxy-beta-D-manno-octulosonate + diphosphate. Its pathway is nucleotide-sugar biosynthesis; CMP-3-deoxy-D-manno-octulosonate biosynthesis; CMP-3-deoxy-D-manno-octulosonate from 3-deoxy-D-manno-octulosonate and CTP: step 1/1. The protein operates within bacterial outer membrane biogenesis; lipopolysaccharide biosynthesis. In terms of biological role, activates KDO (a required 8-carbon sugar) for incorporation into bacterial lipopolysaccharide in Gram-negative bacteria. This Nitrosococcus oceani (strain ATCC 19707 / BCRC 17464 / JCM 30415 / NCIMB 11848 / C-107) protein is 3-deoxy-manno-octulosonate cytidylyltransferase.